Consider the following 347-residue polypeptide: Protein-glutamate methylesterase/protein-glutamine glutaminase 4 (347 aa).

The region spanning 3 to 121 (KVLIVDDSAS…HPNHEREARS (119 aa)) is the Response regulatory domain. Residue aspartate 54 is modified to 4-aspartylphosphate. In terms of domain architecture, CheB-type methylesterase spans 157–342 (PARLKAVAIG…PDRIVTALTS (186 aa)). Catalysis depends on residues serine 168, histidine 195, and aspartate 289.

It belongs to the CheB family. Phosphorylated by CheA. Phosphorylation of the N-terminal regulatory domain activates the methylesterase activity.

It localises to the cytoplasm. The catalysed reaction is [protein]-L-glutamate 5-O-methyl ester + H2O = L-glutamyl-[protein] + methanol + H(+). The enzyme catalyses L-glutaminyl-[protein] + H2O = L-glutamyl-[protein] + NH4(+). Functionally, involved in chemotaxis. Part of a chemotaxis signal transduction system that modulates chemotaxis in response to various stimuli. Catalyzes the demethylation of specific methylglutamate residues introduced into the chemoreceptors (methyl-accepting chemotaxis proteins or MCP) by CheR. Also mediates the irreversible deamidation of specific glutamine residues to glutamic acid. The protein is Protein-glutamate methylesterase/protein-glutamine glutaminase 4 of Geobacter metallireducens (strain ATCC 53774 / DSM 7210 / GS-15).